We begin with the raw amino-acid sequence, 2824 residues long: Highly reducing polyketide synthase stpks1 (2824 aa).

One can recognise a Ketosynthase family 3 (KS3) domain in the interval 8–428 (PKPVAVVGIS…GANGHVIAES (421 aa)). Active-site for beta-ketoacyl synthase activity residues include Cys-177, His-312, and His-348. The malonyl-CoA:ACP transacylase (MAT) domain stretch occupies residues 517–854 (QLVFVFSGQG…LTAVGNLSTL (338 aa)). The For malonyltransferase activity role is filled by Ser-616. The segment at 886-1004 (MPFYSESSEL…GFMTTEVMDK (119 aa)) is N-terminal hotdog fold. The 283-residue stretch at 886–1168 (MPFYSESSEL…SKHWTGAVPT (283 aa)) folds into the PKS/mFAS DH domain. The segment at 894–1083 (ELAVKMKRSR…PSLLDSCIHG (190 aa)) is dehydratase (DH) domain. The active-site Proton acceptor; for dehydratase activity is the His-925. Residues 1018–1168 (TTPADISNLY…SKHWTGAVPT (151 aa)) are C-terminal hotdog fold. Asp-1078 functions as the Proton donor; for dehydratase activity in the catalytic mechanism. The methyltransferase (CMet) domain stretch occupies residues 1101–1449 (PSHIGRVTLY…KFQVVDGAQD (349 aa)). Residues 1213–1232 (APPSANGHANGHANGSANGS) form a disordered region. Positions 1518 to 1840 (TGTFDGAVAT…LPSDFSVSQS (323 aa)) are enoyl reductase (ER) domain. The interval 1842–2096 (ALADDKTYLV…SESVLYNHLV (255 aa)) is ketoreductase (KR) domain. Positions 2109–2196 (DPYEVLQEIV…TAVSTAEKPF (88 aa)) constitute a Carrier domain. Positions 2200-2414 (AMHQPGQTIL…WASSDATTRM (215 aa)) are thioesterase (TE) domain. The tract at residues 2608–2809 (YRQNKVFTSM…ATGYSNVQVC (202 aa)) is methyltransferase (CMet) domain.

Its pathway is mycotoxin biosynthesis. Highly reducing polyketide synthase; part of the gene cluster that mediates the biosynthesis of strobilurin A, an antifungal polyketide that contains a key beta-methoxyacrylate toxophore that targets the complex III of the mitochondrial electron transport chain. Strobilurin biosynthesis begins with construction of benzoyl CoA by step-wise elimination of ammonia from phenylalanine by the phenylalanine ammonia-lyase str11, oxygenation by str8 and retro-Claisen reaction to form benzoic acid, which is activated to its CoA thiolester benzoyl CoA by the dedicated CoA ligase str10. Benzoyl CoA forms the starter unit for the highly reducing polyketide synthase stpks1 that produces the polyketide prestrobilutin A. The FAD-dependent oxygenase str9 then catalyzes the key oxidative rearrangement responsible for the creation of the beta-methoxyacrylate toxophore. Str9 performs epoxidation of the 2,3 olefin of prestrobilutin A, followed by Meinwald rearrangement to furnish the aldehyde intermediate. Rapid enolization of the aldehyde intermediate would give the beta-methoxyacrylate skeleton and methylations catalyzed by str2 and str3 complete the synthesis and lead to the production of strobilurin A. The short-chain dehydrogenase stl2 and the dehydrogenase str4 play a role in the shunt pathway leading to the production of bolineol. The cluster encodes no obvious halogenase gene that could be involved in production of strobilurin B, nor any obvious dimethylallyl-transferase that could be involved in the production of strobilurin G. It is possible that unknown proteins encoded in, or near, the cluster (such as str1 or stl1) may form new classes of halogenases or dimethylally-transferases, or that the responsible genes are located elsewhere on the genome. Similarly, proteins encoded by str5/str6 hydrolases appear to have no chemical role in the biosynthesis of strobilurin A. Finally, no obvious self-resistance gene is found within the cluster. This is Highly reducing polyketide synthase stpks1 from Strobilurus tenacellus.